The primary structure comprises 320 residues: Stress-induced-phosphoprotein 1 (320 aa).

6 TPR repeats span residues 5-38, 40-72, 80-113, 140-173, 175-207, and 208-241; these read AIAE…DPSN, TFYN…GRET, AKAM…FRDP, AQEE…DPEN, ILYS…DSKF, and IKGY…DPSN. The segment at 241 to 269 is disordered; that stretch reads NEEAREGVRNCLRSNDEDPEKAKERSLAD. Basic and acidic residues predominate over residues 242–269; the sequence is EEAREGVRNCLRSNDEDPEKAKERSLAD. The STI1 domain maps to 269–308; the sequence is DPEVQEILRDPGMRMILEQMSNDPGAVREHLKNPEIFQKL.

As to quaternary structure, forms a complex with hsp-1/hsp70 and daf-21/hsp90. Interacts with daf-21/hsp90 (via the C-terminal MEEVD pentapeptide). As to expression, expressed ubiquitously in the whole body. Detected predominantly in the pharyngeal muscles, vulva epithelial cells, striated body-wall muscles, spermathecae and intestinal cell ring. Also observed in the tail regions of hermaphrodite and in the sensory rays and spicules of males.

It localises to the cytoplasm. Its function is as follows. Plays a role in gonad development. Up-regulates longevity and thermotolerance. Binds daf-21/hsp90 and inhibits its ATPase activity. This is Stress-induced-phosphoprotein 1 from Caenorhabditis elegans.